We begin with the raw amino-acid sequence, 701 residues long: Polyribonucleotide nucleotidyltransferase (701 aa).

Residues aspartate 487 and aspartate 493 each contribute to the Mg(2+) site. The KH domain maps to 554-613 (PTMIAMKIDTDKIRDVIGKGGATIRAICEETKASIDIEDDGSIKIFGETKEAADAAKQRI). In terms of domain architecture, S1 motif spans 623–691 (GKIYVGKVER…NRGRIKLSIK (69 aa)).

It belongs to the polyribonucleotide nucleotidyltransferase family. As to quaternary structure, component of the RNA degradosome, which is a multiprotein complex involved in RNA processing and mRNA degradation. It depends on Mg(2+) as a cofactor.

It localises to the cytoplasm. It carries out the reaction RNA(n+1) + phosphate = RNA(n) + a ribonucleoside 5'-diphosphate. Its function is as follows. Involved in mRNA degradation. Catalyzes the phosphorolysis of single-stranded polyribonucleotides processively in the 3'- to 5'-direction. This chain is Polyribonucleotide nucleotidyltransferase, found in Pseudomonas entomophila (strain L48).